A 70-amino-acid chain; its full sequence is Cold shock-like protein (70 aa).

The 61-residue stretch at 5–65 folds into the CSD domain; that stretch reads GTVKWFSKDK…DTKGPRAKNV (61 aa).

Its subcellular location is the cytoplasm. The polypeptide is Cold shock-like protein (csp) (Aquifex aeolicus (strain VF5)).